The primary structure comprises 458 residues: Serine--tRNA ligase (458 aa).

Thr-255 to Glu-257 is an L-serine binding site. Residues Arg-286–Glu-288 and Val-302 contribute to the ATP site. Glu-309 serves as a coordination point for L-serine. Glu-373 to Ser-376 contributes to the ATP binding site. Residue Thr-409 coordinates L-serine.

The protein belongs to the class-II aminoacyl-tRNA synthetase family. Type-1 seryl-tRNA synthetase subfamily. As to quaternary structure, homodimer. The tRNA molecule binds across the dimer.

The protein localises to the cytoplasm. It carries out the reaction tRNA(Ser) + L-serine + ATP = L-seryl-tRNA(Ser) + AMP + diphosphate + H(+). The enzyme catalyses tRNA(Sec) + L-serine + ATP = L-seryl-tRNA(Sec) + AMP + diphosphate + H(+). Its pathway is aminoacyl-tRNA biosynthesis; selenocysteinyl-tRNA(Sec) biosynthesis; L-seryl-tRNA(Sec) from L-serine and tRNA(Sec): step 1/1. Its function is as follows. Catalyzes the attachment of serine to tRNA(Ser). Is also able to aminoacylate tRNA(Sec) with serine, to form the misacylated tRNA L-seryl-tRNA(Sec), which will be further converted into selenocysteinyl-tRNA(Sec). The protein is Serine--tRNA ligase of Ignicoccus hospitalis (strain KIN4/I / DSM 18386 / JCM 14125).